Reading from the N-terminus, the 246-residue chain is Ribonuclease 3 (246 aa).

In terms of domain architecture, RNase III spans 16–144; the sequence is LLEFQKQAGL…VIGAYYIDSG (129 aa). Residue E57 participates in Mg(2+) binding. Residue D61 is part of the active site. Positions 130 and 133 each coordinate Mg(2+). The active site involves E133. In terms of domain architecture, DRBM spans 171-240; it reads DYKSLLQELV…AKVAYENLCS (70 aa).

It belongs to the ribonuclease III family. Homodimer. Mg(2+) serves as cofactor.

Its subcellular location is the cytoplasm. It carries out the reaction Endonucleolytic cleavage to 5'-phosphomonoester.. Digests double-stranded RNA. Involved in the processing of primary rRNA transcript to yield the immediate precursors to the large and small rRNAs (23S and 16S). Processes some mRNAs, and tRNAs when they are encoded in the rRNA operon. Processes pre-crRNA and tracrRNA of type II CRISPR loci if present in the organism. The polypeptide is Ribonuclease 3 (Treponema denticola (strain ATCC 35405 / DSM 14222 / CIP 103919 / JCM 8153 / KCTC 15104)).